Consider the following 272-residue polypeptide: MKDNNEVLKLFIVSDSIGETAQRMIHATLTQFPDLTQVEIKKFPYIKDEQEFLNVLQLAKEQNAIVATTLVSESFNALGHQFANEHQIPYVDYMSELISIIKQHTHAKPLMESGALRKLNDEYFKRIEAIEYSVKYDDGKHFTDIGEADALIVGVSRTSKTPLSMYLANKGYKIANIPLVPEVAIPDNVFQQKNLKVFGLTASPNYIANIRRNRAETLGLSSESNYNSLERIKKELSYAEEVFRKLNATVINTEYKSIEESAFYIEKFLAKR.

154–161 is an ADP binding site; that stretch reads GVSRTSKT.

It belongs to the pyruvate, phosphate/water dikinase regulatory protein family. PDRP subfamily.

It carries out the reaction N(tele)-phospho-L-histidyl/L-threonyl-[pyruvate, phosphate dikinase] + ADP = N(tele)-phospho-L-histidyl/O-phospho-L-threonyl-[pyruvate, phosphate dikinase] + AMP + H(+). The enzyme catalyses N(tele)-phospho-L-histidyl/O-phospho-L-threonyl-[pyruvate, phosphate dikinase] + phosphate + H(+) = N(tele)-phospho-L-histidyl/L-threonyl-[pyruvate, phosphate dikinase] + diphosphate. Its function is as follows. Bifunctional serine/threonine kinase and phosphorylase involved in the regulation of the pyruvate, phosphate dikinase (PPDK) by catalyzing its phosphorylation/dephosphorylation. This Staphylococcus epidermidis (strain ATCC 35984 / DSM 28319 / BCRC 17069 / CCUG 31568 / BM 3577 / RP62A) protein is Putative pyruvate, phosphate dikinase regulatory protein 2.